The following is a 434-amino-acid chain: MDEISSMLDYLGIKSTEELFSDIPLSVRKKEIGIGSPLDEHLVLERARKYASLNSTEMLNFLGNGIYDRVIPEAVNYIISKSEFLDSYTPYQPEVSQGMLQSIFEYQSLISDLFKMDFTNASMYDGYSALGEAARMAYRINGKNKILIPESTYDSKLSVLKNYVWGLSMKIEKYKMNEEGKIDIDDLQSRIDGDTSAVVVENPNGYGVIDENVFRISEIKKESLLISYVDPISLGVLKPPGEYGSDIAIAEGQQLGIPMNFGGPLLGIMSFKADYVRKSPGRLIGESVDADGKRAFVMTLQTREQHIRRAKATSNICSNQALLTLAAGSYLSILGSSGLKKVALLTIKHSKNLAESLGNIGIEKVFDSISFSDTLFRIDKNVMLDLAKKGILGGIKLTSLIKDSKYSSGTFFTATEKTDNEKIKALVNALEVIM.

It belongs to the GcvP family. N-terminal subunit subfamily. The glycine cleavage system is composed of four proteins: P, T, L and H. In this organism, the P 'protein' is a heterodimer of two subunits.

The enzyme catalyses N(6)-[(R)-lipoyl]-L-lysyl-[glycine-cleavage complex H protein] + glycine + H(+) = N(6)-[(R)-S(8)-aminomethyldihydrolipoyl]-L-lysyl-[glycine-cleavage complex H protein] + CO2. In terms of biological role, the glycine cleavage system catalyzes the degradation of glycine. The P protein binds the alpha-amino group of glycine through its pyridoxal phosphate cofactor; CO(2) is released and the remaining methylamine moiety is then transferred to the lipoamide cofactor of the H protein. This Thermoplasma volcanium (strain ATCC 51530 / DSM 4299 / JCM 9571 / NBRC 15438 / GSS1) protein is Probable glycine dehydrogenase (decarboxylating) subunit 1.